We begin with the raw amino-acid sequence, 545 residues long: Glucose-6-phosphate isomerase (545 aa).

The active-site Proton donor is the glutamate 351. Residues histidine 382 and lysine 510 contribute to the active site.

Belongs to the GPI family.

It is found in the cytoplasm. The enzyme catalyses alpha-D-glucose 6-phosphate = beta-D-fructose 6-phosphate. The protein operates within carbohydrate biosynthesis; gluconeogenesis. It participates in carbohydrate degradation; glycolysis; D-glyceraldehyde 3-phosphate and glycerone phosphate from D-glucose: step 2/4. Functionally, catalyzes the reversible isomerization of glucose-6-phosphate to fructose-6-phosphate. This is Glucose-6-phosphate isomerase from Shewanella denitrificans (strain OS217 / ATCC BAA-1090 / DSM 15013).